Reading from the N-terminus, the 328-residue chain is Cell cycle control protein 50A (328 aa).

The tract at residues 1 to 28 is disordered; that stretch reads MAMNYSAKDEVDGGPTGPPGGAAKTRRP. Alanine 2 is subject to N-acetylalanine. The segment at 2–48 is required for ATPase and aminophospholipid flippase activity; it reads AMNYSAKDEVDGGPTGPPGGAAKTRRPDNTAFKQQRLPAWQPILTAG. The Cytoplasmic segment spans residues 2–49; it reads AMNYSAKDEVDGGPTGPPGGAAKTRRPDNTAFKQQRLPAWQPILTAGT. An interaction with ATP8A2 region spans residues 49–315; the sequence is TVLPTFFIIG…LGVVLLVINH (267 aa). The helical transmembrane segment at 50–70 threads the bilayer; sequence VLPTFFIIGLIFIPIGIGIFV. The Exoplasmic loop segment spans residues 71-292; that stretch reads TSNNIREIEG…SWMGGKNPFL (222 aa). Residues 102 to 125 form a disordered region; it reads RDDSQLNGDPSALLNPSKECEPYR. A disulfide bridge links cysteine 121 with cysteine 135. Residues asparagine 144 and asparagine 261 are each glycosylated (N-linked (GlcNAc...) asparagine). A helical transmembrane segment spans residues 293–313; the sequence is GIAYITIGSISFLLGVVLLVI. Topologically, residues 314 to 328 are cytoplasmic; it reads NHKYRNSSNTADITI.

Belongs to the CDC50/LEM3 family. In terms of assembly, component of various P4-ATPase flippase complexes which consists of a catalytic alpha subunit and an accessory beta subunit. Interacts with ATP8A1 to form a flippase complex; this complex forms an intermediate phosphoenzyme. Interacts with ATP8A2 to form a flippase complex. TP8B1:TMEM30A and ATP8B2:TMEM30A flippase complexes have been shown to form intermediate phosphoenzymes in vitro. Interacts with alpha subunits ATP8A1, ATP8B1, ATP8B2, ATP8B4, ATP10A, ATP10B, ATP10D, ATP11A, ATP11B and ATP11C. In terms of processing, N-glycosylated. Contains high mannose-type oligosaccharides.

It is found in the membrane. The protein resides in the golgi apparatus. Its subcellular location is the cytoplasmic vesicle. It localises to the secretory vesicle membrane. The protein localises to the apical cell membrane. It is found in the photoreceptor inner segment. The protein resides in the cell projection. Its subcellular location is the cilium. It localises to the photoreceptor outer segment. Functionally, accessory component of a P4-ATPase flippase complex which catalyzes the hydrolysis of ATP coupled to the transport of aminophospholipids from the outer to the inner leaflet of various membranes and ensures the maintenance of asymmetric distribution of phospholipids. Phospholipid translocation also seems to be implicated in vesicle formation and in uptake of lipid signaling molecules. The beta subunit may assist in binding of the phospholipid substrate. Required for the proper folding, assembly and ER to Golgi exit of the ATP8A2:TMEM30A flippase complex. ATP8A2:TMEM30A may be involved in regulation of neurite outgrowth, and, reconstituted to liposomes, predomiminantly transports phosphatidylserine (PS) and to a lesser extent phosphatidylethanolamine (PE). The ATP8A1:TMEM30A flippase complex seems to play a role in regulation of cell migration probably involving flippase-mediated translocation of phosphatidylethanolamine (PE) at the plasma membrane. Required for the formation of the ATP8A2, ATP8B1 and ATP8B2 P-type ATPAse intermediate phosphoenzymes. Involved in uptake of platelet-activating factor (PAF). Can also mediate the export of alpha subunits ATP8A1, ATP8B1, ATP8B2, ATP8B4, ATP10A, ATP10B, ATP10D, ATP11A, ATP11B and ATP11C from ER to other membrane localizations. The protein is Cell cycle control protein 50A of Rattus norvegicus (Rat).